A 264-amino-acid polypeptide reads, in one-letter code: Thymidylate synthase (264 aa).

Arg21 serves as a coordination point for dUMP. A (6R)-5,10-methylene-5,6,7,8-tetrahydrofolate-binding site is contributed by His51. Residue 126-127 (RR) participates in dUMP binding. Cys146 (nucleophile) is an active-site residue. DUMP contacts are provided by residues 166-169 (RSAD), Asn177, and 207-209 (HLY). Asp169 provides a ligand contact to (6R)-5,10-methylene-5,6,7,8-tetrahydrofolate. A (6R)-5,10-methylene-5,6,7,8-tetrahydrofolate-binding site is contributed by Ala263.

It belongs to the thymidylate synthase family. Bacterial-type ThyA subfamily. Homodimer.

Its subcellular location is the cytoplasm. The enzyme catalyses dUMP + (6R)-5,10-methylene-5,6,7,8-tetrahydrofolate = 7,8-dihydrofolate + dTMP. Its pathway is pyrimidine metabolism; dTTP biosynthesis. Its function is as follows. Catalyzes the reductive methylation of 2'-deoxyuridine-5'-monophosphate (dUMP) to 2'-deoxythymidine-5'-monophosphate (dTMP) while utilizing 5,10-methylenetetrahydrofolate (mTHF) as the methyl donor and reductant in the reaction, yielding dihydrofolate (DHF) as a by-product. This enzymatic reaction provides an intracellular de novo source of dTMP, an essential precursor for DNA biosynthesis. The protein is Thymidylate synthase of Legionella pneumophila (strain Lens).